We begin with the raw amino-acid sequence, 200 residues long: Imidazoleglycerol-phosphate dehydratase (200 aa).

Belongs to the imidazoleglycerol-phosphate dehydratase family.

Its subcellular location is the cytoplasm. It carries out the reaction D-erythro-1-(imidazol-4-yl)glycerol 3-phosphate = 3-(imidazol-4-yl)-2-oxopropyl phosphate + H2O. Its pathway is amino-acid biosynthesis; L-histidine biosynthesis; L-histidine from 5-phospho-alpha-D-ribose 1-diphosphate: step 6/9. The polypeptide is Imidazoleglycerol-phosphate dehydratase (Leifsonia xyli subsp. xyli (strain CTCB07)).